The following is a 515-amino-acid chain: Maturase K (515 aa).

Belongs to the intron maturase 2 family. MatK subfamily.

Its subcellular location is the plastid. The protein resides in the chloroplast. Its function is as follows. Usually encoded in the trnK tRNA gene intron. Probably assists in splicing its own and other chloroplast group II introns. This chain is Maturase K, found in Pinus leiophylla (Chihuahua pine).